We begin with the raw amino-acid sequence, 419 residues long: Gamma-glutamyl phosphate reductase (419 aa).

It belongs to the gamma-glutamyl phosphate reductase family.

The protein localises to the cytoplasm. The enzyme catalyses L-glutamate 5-semialdehyde + phosphate + NADP(+) = L-glutamyl 5-phosphate + NADPH + H(+). Its pathway is amino-acid biosynthesis; L-proline biosynthesis; L-glutamate 5-semialdehyde from L-glutamate: step 2/2. In terms of biological role, catalyzes the NADPH-dependent reduction of L-glutamate 5-phosphate into L-glutamate 5-semialdehyde and phosphate. The product spontaneously undergoes cyclization to form 1-pyrroline-5-carboxylate. This is Gamma-glutamyl phosphate reductase from Bordetella parapertussis (strain 12822 / ATCC BAA-587 / NCTC 13253).